We begin with the raw amino-acid sequence, 291 residues long: Nucleotide-binding protein lwe2422 (291 aa).

ATP is bound at residue 13–20; it reads GMSGAGKT. 63-66 is a binding site for GTP; sequence DLRG.

It belongs to the RapZ-like family.

Its function is as follows. Displays ATPase and GTPase activities. The polypeptide is Nucleotide-binding protein lwe2422 (Listeria welshimeri serovar 6b (strain ATCC 35897 / DSM 20650 / CCUG 15529 / CIP 8149 / NCTC 11857 / SLCC 5334 / V8)).